Here is a 226-residue protein sequence, read N- to C-terminus: Leucyl/phenylalanyl-tRNA--protein transferase (226 aa).

This sequence belongs to the L/F-transferase family.

The protein localises to the cytoplasm. The catalysed reaction is N-terminal L-lysyl-[protein] + L-leucyl-tRNA(Leu) = N-terminal L-leucyl-L-lysyl-[protein] + tRNA(Leu) + H(+). It catalyses the reaction N-terminal L-arginyl-[protein] + L-leucyl-tRNA(Leu) = N-terminal L-leucyl-L-arginyl-[protein] + tRNA(Leu) + H(+). The enzyme catalyses L-phenylalanyl-tRNA(Phe) + an N-terminal L-alpha-aminoacyl-[protein] = an N-terminal L-phenylalanyl-L-alpha-aminoacyl-[protein] + tRNA(Phe). Functions in the N-end rule pathway of protein degradation where it conjugates Leu, Phe and, less efficiently, Met from aminoacyl-tRNAs to the N-termini of proteins containing an N-terminal arginine or lysine. This is Leucyl/phenylalanyl-tRNA--protein transferase from Pseudomonas entomophila (strain L48).